Here is a 602-residue protein sequence, read N- to C-terminus: Peptide-N(4)-(N-acetyl-beta-glucosaminyl)asparagine amidase (602 aa).

One can recognise a Thioredoxin domain in the interval 2-130 (PVREVSRLPE…EKKFLERFVG (129 aa)). 4 residues coordinate Zn(2+): Cys-189, Cys-192, Cys-222, and Cys-225. Catalysis depends on Cys-248, which acts as the Nucleophile. Residues His-275 and Asp-292 contribute to the active site. Positions 400–602 (DMGGRTTGSK…ESMVVRVYMK (203 aa)) constitute a PAW domain.

Belongs to the transglutaminase-like superfamily. PNGase family. The cofactor is Zn(2+).

The protein localises to the cytoplasm. Its subcellular location is the endoplasmic reticulum. It carries out the reaction Hydrolysis of an N(4)-(acetyl-beta-D-glucosaminyl)asparagine residue in which the glucosamine residue may be further glycosylated, to yield a (substituted) N-acetyl-beta-D-glucosaminylamine and a peptide containing an aspartate residue.. Specifically deglycosylates the denatured form of N-linked glycoproteins in the cytoplasm and assists their proteasome-mediated degradation. Cleaves the beta-aspartyl-glucosamine (GlcNAc) of the glycan and the amide side chain of Asn, converting Asn to Asp. Prefers proteins containing high-mannose over those bearing complex type oligosaccharides. Can recognize misfolded proteins in the endoplasmic reticulum that are exported to the cytosol to be destroyed and deglycosylate them, while it has no activity toward native proteins. Deglycosylation is a prerequisite for subsequent proteasome-mediated degradation of some, but not all, misfolded glycoproteins. Also displays oxidoreductase (thioredoxin) activity. This Caenorhabditis briggsae protein is Peptide-N(4)-(N-acetyl-beta-glucosaminyl)asparagine amidase (png-1).